The primary structure comprises 161 residues: Cell division protein SepF (161 aa).

It belongs to the SepF family. In terms of assembly, homodimer. Interacts with FtsZ.

It is found in the cytoplasm. Functionally, cell division protein that is part of the divisome complex and is recruited early to the Z-ring. Probably stimulates Z-ring formation, perhaps through the cross-linking of FtsZ protofilaments. Its function overlaps with FtsA. The chain is Cell division protein SepF from Finegoldia magna (strain ATCC 29328 / DSM 20472 / WAL 2508) (Peptostreptococcus magnus).